The primary structure comprises 231 residues: Glycerol-3-phosphate acyltransferase (231 aa).

A run of 6 helical transmembrane segments spans residues 6-26 (FLFL…LVIG), 55-75 (WGIL…TIFL), 95-115 (LTMK…FSLF), 130-150 (IITS…AIFL), 152-172 (LFGY…IFLW), and 196-216 (LFYF…YSNI).

This sequence belongs to the PlsY family. In terms of assembly, probably interacts with PlsX.

It is found in the cell membrane. It catalyses the reaction an acyl phosphate + sn-glycerol 3-phosphate = a 1-acyl-sn-glycero-3-phosphate + phosphate. Its pathway is lipid metabolism; phospholipid metabolism. In terms of biological role, catalyzes the transfer of an acyl group from acyl-phosphate (acyl-PO(4)) to glycerol-3-phosphate (G3P) to form lysophosphatidic acid (LPA). This enzyme utilizes acyl-phosphate as fatty acyl donor, but not acyl-CoA or acyl-ACP. The chain is Glycerol-3-phosphate acyltransferase from Aster yellows witches'-broom phytoplasma (strain AYWB).